A 243-amino-acid chain; its full sequence is 2-C-methyl-D-erythritol 4-phosphate cytidylyltransferase (243 aa).

It belongs to the IspD/TarI cytidylyltransferase family. IspD subfamily.

The enzyme catalyses 2-C-methyl-D-erythritol 4-phosphate + CTP + H(+) = 4-CDP-2-C-methyl-D-erythritol + diphosphate. It participates in isoprenoid biosynthesis; isopentenyl diphosphate biosynthesis via DXP pathway; isopentenyl diphosphate from 1-deoxy-D-xylulose 5-phosphate: step 2/6. Catalyzes the formation of 4-diphosphocytidyl-2-C-methyl-D-erythritol from CTP and 2-C-methyl-D-erythritol 4-phosphate (MEP). In Colwellia psychrerythraea (strain 34H / ATCC BAA-681) (Vibrio psychroerythus), this protein is 2-C-methyl-D-erythritol 4-phosphate cytidylyltransferase.